We begin with the raw amino-acid sequence, 202 residues long: ATP-dependent Clp protease proteolytic subunit (202 aa).

The active-site Nucleophile is the Ser101. Residue His126 is part of the active site.

It belongs to the peptidase S14 family. As to quaternary structure, component of the chloroplastic Clp protease core complex.

Its subcellular location is the plastid. It is found in the chloroplast stroma. It carries out the reaction Hydrolysis of proteins to small peptides in the presence of ATP and magnesium. alpha-casein is the usual test substrate. In the absence of ATP, only oligopeptides shorter than five residues are hydrolyzed (such as succinyl-Leu-Tyr-|-NHMec, and Leu-Tyr-Leu-|-Tyr-Trp, in which cleavage of the -Tyr-|-Leu- and -Tyr-|-Trp bonds also occurs).. Its function is as follows. Cleaves peptides in various proteins in a process that requires ATP hydrolysis. Has a chymotrypsin-like activity. Plays a major role in the degradation of misfolded proteins. This chain is ATP-dependent Clp protease proteolytic subunit, found in Buxus microphylla (Littleleaf boxwood).